The primary structure comprises 161 residues: Ribosome maturation factor RimP (161 aa).

The protein belongs to the RimP family.

The protein localises to the cytoplasm. Its function is as follows. Required for maturation of 30S ribosomal subunits. The chain is Ribosome maturation factor RimP from Pelobacter propionicus (strain DSM 2379 / NBRC 103807 / OttBd1).